Reading from the N-terminus, the 378-residue chain is 1-acyl-sn-glycerol-3-phosphate acyltransferase delta (378 aa).

A helical membrane pass occupies residues 11–31 (FLCHLVFCYVFIASGLIINTI). An HXXXXD motif motif is present at residues 96-101 (HKFEID). Helical transmembrane passes span 125 to 145 (ELAY…VFCS), 307 to 327 (TLVN…QFLV), and 338 to 358 (LASF…MIGV).

This sequence belongs to the 1-acyl-sn-glycerol-3-phosphate acyltransferase family.

The protein localises to the endoplasmic reticulum membrane. It carries out the reaction a 1-acyl-sn-glycero-3-phosphate + an acyl-CoA = a 1,2-diacyl-sn-glycero-3-phosphate + CoA. The enzyme catalyses (4Z,7Z,10Z,13Z,16Z,19Z)-docosahexaenoyl-CoA + 1-hexadecanoyl-sn-glycero-3-phosphate = 1-hexadecanoyl-2-(4Z,7Z,10Z,13Z,16Z,19Z-docosahexaenoyl)-sn-glycero-3-phosphate + CoA. The catalysed reaction is 1-octadecanoyl-sn-glycero-3-phosphate + (9Z,12Z)-octadecadienoyl-CoA = 1-octadecanoyl-2-(9Z,12Z-octadecadienoyl)-sn-glycero-3-phosphate + CoA. It catalyses the reaction 1-octadecanoyl-sn-glycero-3-phosphate + (4Z,7Z,10Z,13Z,16Z,19Z)-docosahexaenoyl-CoA = 1-octadecanoyl-2-(4Z,7Z,10Z,13Z,16Z,19Z-docosahexaenoyl)-sn-glycero-3-phosphate + CoA. It carries out the reaction (4Z,7Z,10Z,13Z,16Z,19Z)-docosahexaenoyl-CoA + 1-(9Z-octadecenoyl)-sn-glycero-3-phosphate = 1-(9Z-octadecenoyl)-2-(4Z,7Z,10Z,13Z,16Z,19Z-docosahexaenoyl)-sn-glycero-3-phosphate + CoA. It participates in phospholipid metabolism; CDP-diacylglycerol biosynthesis; CDP-diacylglycerol from sn-glycerol 3-phosphate: step 2/3. Its function is as follows. Converts 1-acyl-sn-glycerol-3-phosphate (lysophosphatidic acid or LPA) into 1,2-diacyl-sn-glycerol-3-phosphate (phosphatidic acid or PA) by incorporating an acyl moiety at the sn-2 position of the glycerol backbone. Exhibits high acyl-CoA specificity for polyunsaturated fatty acyl-CoA, especially docosahexaenoyl-CoA (22:6-CoA, DHA-CoA). The protein is 1-acyl-sn-glycerol-3-phosphate acyltransferase delta (AGPAT4) of Pongo abelii (Sumatran orangutan).